Consider the following 232-residue polypeptide: 5'-methylthioadenosine/S-adenosylhomocysteine nucleosidase (232 aa).

The active-site Proton acceptor is Glu12. Residues Gly78, Val153, and 174-175 (ME) contribute to the substrate site. Catalysis depends on Asp198, which acts as the Proton donor.

Belongs to the PNP/UDP phosphorylase family. MtnN subfamily.

The catalysed reaction is S-adenosyl-L-homocysteine + H2O = S-(5-deoxy-D-ribos-5-yl)-L-homocysteine + adenine. The enzyme catalyses S-methyl-5'-thioadenosine + H2O = 5-(methylsulfanyl)-D-ribose + adenine. It catalyses the reaction 5'-deoxyadenosine + H2O = 5-deoxy-D-ribose + adenine. Its pathway is amino-acid biosynthesis; L-methionine biosynthesis via salvage pathway; S-methyl-5-thio-alpha-D-ribose 1-phosphate from S-methyl-5'-thioadenosine (hydrolase route): step 1/2. Its function is as follows. Catalyzes the irreversible cleavage of the glycosidic bond in both 5'-methylthioadenosine (MTA) and S-adenosylhomocysteine (SAH/AdoHcy) to adenine and the corresponding thioribose, 5'-methylthioribose and S-ribosylhomocysteine, respectively. Also cleaves 5'-deoxyadenosine, a toxic by-product of radical S-adenosylmethionine (SAM) enzymes, into 5-deoxyribose and adenine. This Photobacterium profundum (strain SS9) protein is 5'-methylthioadenosine/S-adenosylhomocysteine nucleosidase.